The chain runs to 631 residues: Probable sulfate transporter 3.3 (631 aa).

At 1-69 (MEVHKVVAPP…EYSFSLLKSD (69 aa)) the chain is on the cytoplasmic side. A helical transmembrane segment spans residues 70 to 90 (VVSGLTIASLAIPQGISYAKL). Topologically, residues 91–92 (AN) are extracellular. A helical membrane pass occupies residues 93–113 (LPPIVGLYSSFVPPLVYAVLG). Residues 114–117 (SSRD) are Cytoplasmic-facing. Residues 118-138 (LAVGPVSIASLILGSMLRQQV) form a helical membrane-spanning segment. Topologically, residues 139 to 144 (SPVDDP) are extracellular. The helical transmembrane segment at 145-165 (VLFLQLAFSSTFFAGLFQASL) threads the bilayer. The Cytoplasmic portion of the chain corresponds to 166-171 (GILRLG). The chain crosses the membrane as a helical span at residues 172–192 (FIIDFLSKATLIGFMGGAAII). Residues 193 to 223 (VSLQQLKGLLGITHFTKHMSVVPVLSSVFQH) lie on the Extracellular side of the membrane. Residues 224-244 (TNEWSWQTIVMGVCFLLFLLS) form a helical membrane-spanning segment. Residues 245-256 (TRHLSMKKPKLF) lie on the Cytoplasmic side of the membrane. A helical transmembrane segment spans residues 257–277 (WVSAGAPLLSVIVSTLLVFVF). Residues 278–309 (RAERHGISVIGKLPEGLNPPSWNMLQFHGSHL) are Extracellular-facing. The helical transmembrane segment at 310-330 (ALVAKTGLVTGIVSLTEGIAV) threads the bilayer. Over 331-347 (GRTFAALKNYHVDGNKE) the chain is Cytoplasmic. Residues 348–368 (MIAIGLMNVVGSATSCYVTTG) form a helical membrane-spanning segment. Topologically, residues 369-384 (AFSRSAVNNNAGAKTA) are extracellular. Residues 385 to 405 (VSNIVMSVTVMVTLLFLMPLF) traverse the membrane as a helical segment. Residues 406-410 (EYTPN) lie on the Cytoplasmic side of the membrane. The chain crosses the membrane as a helical span at residues 411–431 (VVLGAIIVTAVIGLIDLPAAC). Residues 432–441 (HIWKIDKFDF) lie on the Extracellular side of the membrane. A helical membrane pass occupies residues 442–462 (LVMLCAFFGVIFLSVQNGLAI). The Cytoplasmic portion of the chain corresponds to 463-631 (AVGLSLFKIL…SLKGPSLSNV (169 aa)). One can recognise an STAS domain in the interval 497–621 (HYKEAQRIPG…LTVAEAVASL (125 aa)).

This sequence belongs to the SLC26A/SulP transporter (TC 2.A.53) family. As to expression, expressed only in leaves.

The protein resides in the membrane. Functionally, h(+)/sulfate cotransporter that may play a role in the regulation of sulfate assimilation. The protein is Probable sulfate transporter 3.3 (SULTR3;3) of Arabidopsis thaliana (Mouse-ear cress).